Here is a 146-residue protein sequence, read N- to C-terminus: Large ribosomal subunit protein bL9 (146 aa).

It belongs to the bacterial ribosomal protein bL9 family.

Its function is as follows. Binds to the 23S rRNA. This Symbiobacterium thermophilum (strain DSM 24528 / JCM 14929 / IAM 14863 / T) protein is Large ribosomal subunit protein bL9.